Reading from the N-terminus, the 68-residue chain is Large ribosomal subunit protein uL29 (68 aa).

It belongs to the universal ribosomal protein uL29 family.

In Streptococcus pneumoniae (strain JJA), this protein is Large ribosomal subunit protein uL29.